The following is a 287-amino-acid chain: Lycopene elongase/hydratase (287 aa).

Transmembrane regions (helical) follow at residues 15-35 (ISWVNTAYPFGLAYLLNAGEI), 37-57 (WLFWLGIVFFLIPYNIAMYGI), 97-117 (IPFLVILFIFGTWMSSLWLTI), 137-157 (FIDALTSSTHFTSPALIGATI), 166-186 (MWIALGSFFLWGMASQILGAV), 218-238 (LLAAVLVTTLPNPAWIIGIAI), and 265-285 (VFLWLNYFVGAVITILLIAIH).

The protein belongs to the UbiA prenyltransferase family.

The protein localises to the cell membrane. It carries out the reaction all-trans-lycopene + dimethylallyl diphosphate + A + H2O = nonaflavuxanthin + AH2 + diphosphate. It catalyses the reaction nonaflavuxanthin + dimethylallyl diphosphate + A + H2O = flavuxanthin + AH2 + diphosphate. Its pathway is carotenoid biosynthesis. Catalyzes the elongation of the C(40) carotenoid all-trans-lycopene to the acyclic C(50) carotenoid flavuxanthin during decaprenoxanthin biosynthesis. Acts as a bifunctional enzyme that catalyzes the elongation of lycopene by attaching a C(5) isoprene unit at C-2, as well as the hydroxylation of the new isoprene unit. The enzyme acts at both ends of the substrate, forming the C(50) carotenoid flavuxanthin via the C(45) intermediate nonaflavuxanthin. This chain is Lycopene elongase/hydratase, found in Corynebacterium glutamicum (Brevibacterium saccharolyticum).